A 487-amino-acid polypeptide reads, in one-letter code: 3-octaprenyl-4-hydroxybenzoate carboxy-lyase (487 aa).

Mn(2+) is bound at residue N172. Residues 175–177 (IYR), 189–191 (RWL), and 194–195 (RG) each bind prenylated FMN. E238 contributes to the Mn(2+) binding site. D287 functions as the Proton donor in the catalytic mechanism.

This sequence belongs to the UbiD family. In terms of assembly, homohexamer. The cofactor is prenylated FMN. Mn(2+) is required as a cofactor.

Its subcellular location is the cell membrane. It carries out the reaction a 4-hydroxy-3-(all-trans-polyprenyl)benzoate + H(+) = a 2-(all-trans-polyprenyl)phenol + CO2. Its pathway is cofactor biosynthesis; ubiquinone biosynthesis. Catalyzes the decarboxylation of 3-octaprenyl-4-hydroxy benzoate to 2-octaprenylphenol, an intermediate step in ubiquinone biosynthesis. In Actinobacillus pleuropneumoniae serotype 5b (strain L20), this protein is 3-octaprenyl-4-hydroxybenzoate carboxy-lyase.